A 208-amino-acid polypeptide reads, in one-letter code: Thymidylate kinase (208 aa).

10–17 (GIDGSGKS) contacts ATP.

The protein belongs to the thymidylate kinase family.

It carries out the reaction dTMP + ATP = dTDP + ADP. Its function is as follows. Phosphorylation of dTMP to form dTDP in both de novo and salvage pathways of dTTP synthesis. The sequence is that of Thymidylate kinase from Jannaschia sp. (strain CCS1).